The primary structure comprises 333 residues: Cinnamoyl-CoA reductase 1 (333 aa).

NADP(+) is bound by residues 13–19 (GAGGFIA), arginine 38, lysine 44, 64–65 (DL), 84–86 (TAS), tyrosine 157, lysine 161, 184–187 (PVLV), and serine 199. Cysteine 150 and cysteine 158 are disulfide-bonded. Lysine 161 functions as the Proton donor in the catalytic mechanism.

It belongs to the NAD(P)-dependent epimerase/dehydratase family. Dihydroflavonol-4-reductase subfamily. Post-translationally, the formation of a reversible disulfide bond reduces activity by perturbing the positioning of nearby catalytic residues. As to expression, expressed in flowers, leaves and stems.

Its subcellular location is the cytoplasm. The catalysed reaction is (E)-coniferaldehyde + NADP(+) + CoA = (E)-feruloyl-CoA + NADPH + H(+). The enzyme catalyses (E)-4-coumaraldehyde + NADP(+) + CoA = (E)-4-coumaroyl-CoA + NADPH + H(+). It catalyses the reaction (E)-sinapaldehyde + NADP(+) + CoA = (E)-sinapoyl-CoA + NADPH + H(+). It carries out the reaction (E)-cinnamaldehyde + NADP(+) + CoA = (E)-cinnamoyl-CoA + NADPH + H(+). It functions in the pathway aromatic compound metabolism; phenylpropanoid biosynthesis. Inhibited by sodium iodide-mediated oxidation. Functionally, involved in the latter stages of lignin biosynthesis. Catalyzes one of the last steps of monolignol biosynthesis, the conversion of cinnamoyl-CoAs into their corresponding cinnamaldehydes. Mediates the conversion of feruloyl CoA to coniferylaldehyde. Also active toward p-coumaroyl-CoA and sinapoyl-CoA. Involved in the production of floral volatile phenylpropanoids in flowers of fragrant cultivars (e.g. cv. Mitchell and cv. V26) from cinnamic acid, a common precursor with the anthocyanin biosynthesis pathway involved in flower pigmentation. The chain is Cinnamoyl-CoA reductase 1 from Petunia hybrida (Petunia).